The primary structure comprises 953 residues: Probable LRR receptor-like serine/threonine-protein kinase At1g53420 (953 aa).

Positions Met-1–Ala-22 are cleaved as a signal peptide. Over Ser-23–Thr-566 the chain is Extracellular. 6 LRR repeats span residues Trp-63–Leu-86, Leu-88–Leu-110, Pro-111–Asn-132, Thr-135–Pro-158, Asn-159–Thr-182, and Thr-183–Trp-205. N-linked (GlcNAc...) asparagine glycans are attached at residues Asn-100 and Asn-132. N-linked (GlcNAc...) asparagine glycans are attached at residues Asn-265, Asn-315, Asn-335, Asn-378, and Asn-423. The helical transmembrane segment at Leu-567–Trp-587 threads the bilayer. The Cytoplasmic segment spans residues Lys-588–His-953. The Protein kinase domain occupies Phe-624–Val-901. ATP contacts are provided by residues Ile-630 to Val-638 and Lys-652. Phosphotyrosine is present on Tyr-697. Asp-750 serves as the catalytic Proton acceptor. At Ser-783 the chain carries Phosphoserine. Residues Thr-784 and Thr-789 each carry the phosphothreonine modification. At Tyr-797 the chain carries Phosphotyrosine.

The protein belongs to the protein kinase superfamily. Ser/Thr protein kinase family.

The protein resides in the membrane. It catalyses the reaction L-seryl-[protein] + ATP = O-phospho-L-seryl-[protein] + ADP + H(+). The catalysed reaction is L-threonyl-[protein] + ATP = O-phospho-L-threonyl-[protein] + ADP + H(+). The sequence is that of Probable LRR receptor-like serine/threonine-protein kinase At1g53420 from Arabidopsis thaliana (Mouse-ear cress).